Here is a 979-residue protein sequence, read N- to C-terminus: UPF0182 protein Mb0065 (979 aa).

The next 7 membrane-spanning stretches (helical) occupy residues 19 to 41, 63 to 85, 114 to 136, 174 to 196, 208 to 230, 261 to 280, and 285 to 307; these read LVTAGMGMLALLLFGPRLVDIYV, LAIVAAVALVVAGIVLAALLLAY, LFGWGIAVTLGVVCGLIASFDWV, WLFVAVVLAFLASLLTHYLFGGL, AARVQLAVFAGAVVLLKAVAYWL, LVLVAIAVLCAVSFFTAIFL, and IPAMAAALLVLSAILVGGLWPLL. A disordered region spans residues 898–948; sequence GTGRVATAPGGDAASAPPPGAGGPAPPQAVPPPRTTQPPAAPPRGPDVPPA. Residues 902 to 912 show a composition bias toward low complexity; that stretch reads VATAPGGDAAS. Pro residues predominate over residues 913–946; that stretch reads APPPGAGGPAPPQAVPPPRTTQPPAAPPRGPDVP.

This sequence belongs to the UPF0182 family.

It localises to the cell membrane. The sequence is that of UPF0182 protein Mb0065 from Mycobacterium bovis (strain ATCC BAA-935 / AF2122/97).